The chain runs to 459 residues: Phosphomethylpyrimidine synthase (459 aa).

Substrate-binding positions include N80, M109, Y139, H175, 195 to 197, 236 to 239, and E275; these read SRG and DSLR. Zn(2+) is bound at residue H279. Y302 lines the substrate pocket. H343 serves as a coordination point for Zn(2+). 3 residues coordinate [4Fe-4S] cluster: C423, C426, and C431.

It belongs to the ThiC family. [4Fe-4S] cluster is required as a cofactor.

It carries out the reaction 5-amino-1-(5-phospho-beta-D-ribosyl)imidazole + S-adenosyl-L-methionine = 4-amino-2-methyl-5-(phosphooxymethyl)pyrimidine + CO + 5'-deoxyadenosine + formate + L-methionine + 3 H(+). The protein operates within cofactor biosynthesis; thiamine diphosphate biosynthesis. Its function is as follows. Catalyzes the synthesis of the hydroxymethylpyrimidine phosphate (HMP-P) moiety of thiamine from aminoimidazole ribotide (AIR) in a radical S-adenosyl-L-methionine (SAM)-dependent reaction. In Prochlorococcus marinus (strain MIT 9303), this protein is Phosphomethylpyrimidine synthase.